We begin with the raw amino-acid sequence, 695 residues long: Probable glutamine--tRNA ligase (695 aa).

The 'HIGH' region motif lies at 201–211; that stretch reads PEPNGILHIGH. Residues 202–204 and 208–214 each bind ATP; these read EPN and HIGHAKA. Positions 234 and 391 each coordinate L-glutamine. ATP-binding positions include Thr-410, 439–440, and 447–449; these read RL and LSK. A 'KMSKS' region motif is present at residues 446–450; that stretch reads VLSKR.

Belongs to the class-I aminoacyl-tRNA synthetase family.

The catalysed reaction is tRNA(Gln) + L-glutamine + ATP = L-glutaminyl-tRNA(Gln) + AMP + diphosphate. This chain is Probable glutamine--tRNA ligase, found in Vairimorpha ceranae (strain BRL01) (Microsporidian parasite).